The sequence spans 233 residues: N-(5'-phosphoribosyl)anthranilate isomerase (233 aa).

The protein belongs to the TrpF family.

It carries out the reaction N-(5-phospho-beta-D-ribosyl)anthranilate = 1-(2-carboxyphenylamino)-1-deoxy-D-ribulose 5-phosphate. Its pathway is amino-acid biosynthesis; L-tryptophan biosynthesis; L-tryptophan from chorismate: step 3/5. This chain is N-(5'-phosphoribosyl)anthranilate isomerase, found in Ralstonia pickettii (strain 12J).